The following is a 136-amino-acid chain: Probable endoribonuclease MazF7 (136 aa).

The segment at 115–136 is disordered; it reads TGPERGEAATHSPVRWTGGRDP.

Belongs to the PemK/MazF family. As to quaternary structure, forms a complex with cognate antitoxin MazE7.

Its function is as follows. Toxic component of a type II toxin-antitoxin (TA) system. Upon expression in E.coli and M.smegmatis inhibits cell growth and colony formation. Its toxic effect is neutralized by coexpression with cognate antitoxin MazE7. Probably an endoribonuclease. The sequence is that of Probable endoribonuclease MazF7 (mazF7) from Mycobacterium tuberculosis (strain ATCC 25618 / H37Rv).